We begin with the raw amino-acid sequence, 268 residues long: MFSTKQVVLSSLLFISSIYTSNVNGKNLSVFGAFFGSPNDNDNAREHCCSPRNKFHLTSFSSGCDLQKEVECLRAECKKSKECCNVVSLCSGLSECEYVEKTCDAIKQYYQKQAINTDVKITLVLKWIYKCMNTTSRAKLAVFTAHAIFNTSAFACLEAEGTWKYRSRGLLAIQGEKNYGLLTSYSRNRENFKECPHRLADLNCDVISVTVDWWYRNVGKCCKDYFGSLEILKPTEWTALKKNCADRESARRLENRRRLYEILVRCYE.

The N-terminal stretch at 1–25 (MFSTKQVVLSSLLFISSIYTSNVNG) is a signal peptide. N-linked (GlcNAc...) asparagine glycosylation occurs at N27. The HBM motif lies at 77–82 (CKKSKE). Residues N133 and N150 are each glycosylated (N-linked (GlcNAc...) asparagine).

It is found in the spore wall. This chain is Spore wall protein 25 (SWP25), found in Nosema bombycis (strain CQ1 / CVCC 102059) (Microsporidian parasite).